A 1257-amino-acid chain; its full sequence is Liprin-alpha-2 (1257 aa).

Disordered stretches follow at residues 1–29 (MMCE…DSDS), 231–265 (ASSE…DSTD), and 438–463 (EGQL…EHNK). A compositionally biased stretch (low complexity) spans 16 to 26 (SQRGSQSSGSD). Coiled-coil stretches lie at residues 29–154 (SHFE…SLRM), 185–541 (KALD…SLIE), and 643–695 (HSDA…GLNL). A Phosphoserine modification is found at Ser-236. Thr-237 is subject to Phosphothreonine. Positions 238 to 256 (ESEHLEGMEPGQKVHEKRL) are enriched in basic and acidic residues. Ser-239 carries the phosphoserine modification. Ser-687 and Ser-689 each carry phosphoserine. 2 stretches are compositionally biased toward low complexity: residues 709-725 (TASS…HSTP) and 798-813 (SSLS…GLGS). Disordered regions lie at residues 709–738 (TASS…EMDR) and 790–834 (SSYH…KSSI). Phosphoserine occurs at positions 817 and 820. SAM domains lie at 898–964 (WDGP…MVSL), 1020–1084 (NHEW…LKRL), and 1108–1177 (WSND…LLAL). Residues 1081–1107 (LKRLNYDRKELERRREASQHEIKDVLV) are a coiled coil.

The protein belongs to the liprin family. Liprin-alpha subfamily. Forms homodimers and heterodimers with liprins-alpha and liprins-beta. Interacts with the second PTPase domain of PTPRD, PTPRF and PTPRS. Interacts with KIF1A; the interaction decreases in presence of calcium. In terms of tissue distribution, expressed only in brain.

It is found in the cytoplasm. The protein resides in the cell surface. The protein localises to the cell projection. Its subcellular location is the dendritic spine. In terms of biological role, alters PTPRF cellular localization and induces PTPRF clustering. May regulate the disassembly of focal adhesions. May localize receptor-like tyrosine phosphatases type 2A at specific sites on the plasma membrane, possibly regulating their interaction with the extracellular environment and their association with substrates. In neuronal cells, is a scaffolding protein in the dendritic spines which acts as immobile postsynaptic post able to recruit KIF1A-driven dense core vesicles to dendritic spines. In Homo sapiens (Human), this protein is Liprin-alpha-2 (PPFIA2).